We begin with the raw amino-acid sequence, 301 residues long: Putative S-adenosyl-L-methionine-dependent methyltransferase MUL_0450 (301 aa).

S-adenosyl-L-methionine contacts are provided by residues Asp127 and 156-157 (DL).

It belongs to the UPF0677 family.

In terms of biological role, exhibits S-adenosyl-L-methionine-dependent methyltransferase activity. The protein is Putative S-adenosyl-L-methionine-dependent methyltransferase MUL_0450 of Mycobacterium ulcerans (strain Agy99).